Reading from the N-terminus, the 461-residue chain is Coagulation factor IX (461 aa).

An N-terminal signal peptide occupies residues 1–28; that stretch reads MQRVNMIMAESPGLITICLLGYLLSAEC. Residues 29-46 constitute a propeptide that is removed on maturation; it reads TVFLDHENANKILNRPKR. Ca(2+) contacts are provided by Y47, N48, E53, E54, E61, E63, E66, E67, E72, E73, and E76. Residues 47-92 form the Gla domain; it reads YNSGKLEEFVQGNLERECMEEKCSFEEAREVFENTERTTEFWKQYV. 4-carboxyglutamate is present on residues E53, E54, E61, E63, E66, E67, E72, E73, E76, E79, and E82. E61 is a Mg(2+) binding site. C64 and C69 are oxidised to a cystine. Residue E66 participates in Mg(2+) binding. E72 contacts Mg(2+). Residue E76 participates in Mg(2+) binding. Residue E82 participates in Ca(2+) binding. E82 serves as a coordination point for Mg(2+). O-linked (GalNAc...) threonine glycosylation is present at T85. Ca(2+) contacts are provided by E86, D93, G94, and Q96. E86 carries the 4-carboxyglutamate modification. Position 86 (E86) interacts with Mg(2+). The 37-residue stretch at 93 to 129 folds into the EGF-like 1; calcium-binding domain; that stretch reads DGDQCESNPCLNGGSCKDDINSYECWCPFGFEGKNCE. Intrachain disulfides connect C97–C108, C102–C117, C119–C128, C134–C145, C141–C155, C157–C170, C178–C335, C252–C268, C382–C396, and C407–C435. O-linked (Glc...) serine glycosylation occurs at S99. Residue S107 is glycosylated (O-linked (Fuc...) serine). Ca(2+) contacts are provided by D110 and D111. D110 carries the post-translational modification (3R)-3-hydroxyaspartate. At S114 the chain carries Phosphoserine. In terms of domain architecture, EGF-like 2 spans 130-171; the sequence is LDVTCNIKNGRCEQFCKNSADNKVVCSCTEGYRLAENQKSCE. The propeptide at 192–226 is activation peptide; the sequence is AETVFPDVDYVNSTEAETILDNITQSTQSFNDFTR. A Sulfotyrosine modification is found at Y201. Residue N203 is glycosylated (N-linked (GlcNAc...) asparagine). Phosphoserine is present on S204. Phosphothreonine; alternate is present on T205. T205 is a glycosylation site (O-linked (GalNAc...) threonine; alternate). A glycan (N-linked (GlcNAc...) asparagine) is linked at N213. 2 O-linked (GalNAc...) threonine glycosylation sites follow: T215 and T225. Residues 227 to 459 form the Peptidase S1 domain; the sequence is VVGGEDAKPG…YVNWIKEKTK (233 aa). Residue H267 is the Charge relay system of the active site. Residues E281, N283, E286, E288, and E291 each contribute to the Ca(2+) site. The active-site Charge relay system is the D315. S411 functions as the Charge relay system in the catalytic mechanism.

It belongs to the peptidase S1 family. In terms of assembly, heterodimer of a light chain and a heavy chain; disulfide-linked. Interacts (inactive and activated) with F11 (activated) in calcium-dependent manner. Interacts with SERPINC1. Interacts (activated) with iripin-8, a serine protease inhibitor from Ixodes ricinus saliva. Interacts (inactive and activated) with nitrophorin-2, an anticoagulant protein from Rhodnius prolixus. Post-translationally, activated by factor XIa, which excises the activation peptide. The propeptide can also be removed by snake venom protease. Activated by coagulation factor VIIa-tissue factor (F7-F3) complex in calcium-dependent manner. In terms of processing, the iron and 2-oxoglutarate dependent 3-hydroxylation of aspartate and asparagine is (R) stereospecific within EGF domains. In terms of tissue distribution, detected in blood plasma (at protein level). Synthesized primarily in the liver and secreted in plasma.

The protein resides in the secreted. It catalyses the reaction Selective cleavage of Arg-|-Ile bond in factor X to form factor Xa.. Factor IX is a vitamin K-dependent plasma protein that participates in the intrinsic pathway of blood coagulation by converting factor X to its active form in the presence of Ca(2+) ions, phospholipids, and factor VIIIa. The polypeptide is Coagulation factor IX (F9) (Homo sapiens (Human)).